We begin with the raw amino-acid sequence, 379 residues long: MSEFLPFSRPAMGVEELAAVKEVLESGWITTGPKNQALEQAFCQLTGNQHAIAVSSATAGMHITLMALEIGKGDEVITPSLTWVSTLNMISLLGATPVMVDVDRDTLMVTPEAIESAITPRTKAIIPVHYAGAPADIDAIRAIGERYGIAVIEDAAHAVGTYYKGRHIGAKGTAIFSFHAIKNITCAEGGLIVTDNENLARQLRMLKFHGLGVDAYDRQTWGRAPQAEVLTPGYKYNLTDINAAIALTQLAKLEHLNTRRREIAQQYQQALAALPFQPLSLPAWPHVHAWHLFIIRVDEQRCGISRDALMEALKERGIGTGLHFRAAHTQKYYRERCPTLSLPNTEWNSERICSLPLFPDMTTADADRVITALQQLAGQ.

K182 bears the N6-(pyridoxal phosphate)lysine mark.

It belongs to the DegT/DnrJ/EryC1 family. ArnB subfamily. As to quaternary structure, homodimer. Pyridoxal 5'-phosphate is required as a cofactor.

It catalyses the reaction UDP-4-amino-4-deoxy-beta-L-arabinose + 2-oxoglutarate = UDP-beta-L-threo-pentopyranos-4-ulose + L-glutamate. It participates in nucleotide-sugar biosynthesis; UDP-4-deoxy-4-formamido-beta-L-arabinose biosynthesis; UDP-4-deoxy-4-formamido-beta-L-arabinose from UDP-alpha-D-glucuronate: step 2/3. It functions in the pathway bacterial outer membrane biogenesis; lipopolysaccharide biosynthesis. In terms of biological role, catalyzes the conversion of UDP-4-keto-arabinose (UDP-Ara4O) to UDP-4-amino-4-deoxy-L-arabinose (UDP-L-Ara4N). The modified arabinose is attached to lipid A and is required for resistance to polymyxin and cationic antimicrobial peptides. The protein is UDP-4-amino-4-deoxy-L-arabinose--oxoglutarate aminotransferase of Escherichia coli O7:K1 (strain IAI39 / ExPEC).